The chain runs to 313 residues: Mitochondrial uncoupling protein 4 (313 aa).

Solcar repeat units follow at residues 4 to 115 (KSFV…LKNK), 124 to 215 (LNLS…FKEG), and 224 to 309 (DGLG…VRKL). The next 6 helical transmembrane spans lie at 6-26 (FVEG…LDLI), 84-104 (AAAL…YSTT), 130-150 (IGAG…ADVA), 189-209 (RGSA…LASY), 230-250 (VVAS…VDVI), and 282-302 (YKGF…LFVT).

This sequence belongs to the mitochondrial carrier (TC 2.A.29) family. As to expression, expressed in roots, leaves, stems and flowers.

The protein resides in the mitochondrion inner membrane. In terms of biological role, PUMPS are mitochondrial transporter proteins that create proton leaks across the inner mitochondrial membrane, thus uncoupling oxidative phosphorylation. This leads to a decrease in the efficiency of oxidative phosphorylation and an increase in heat production. May be involved in protecting plant cells against oxidative stress damage. Recombinant PUMP4, reconstituted into liposomes, transports a wide range of dicarboxylic acids including malate, oxaloacetate and succinate as well as phosphate, sulfate and thiosulfate. However, it is unknown if these transports are of any biological significance in vivo. This chain is Mitochondrial uncoupling protein 4 (PUMP4), found in Arabidopsis thaliana (Mouse-ear cress).